We begin with the raw amino-acid sequence, 282 residues long: MTNFSSSPPIAFGDLQGCHAAYRQLFDTLAPAADTPLWFAGDLVNRGPASLATLREIVALGERAIAVLGNHDLHLLAVAAGIRTLKPGDTIGEILDAPDADDLIEWVRHRPFAHFERGMLMVHAGLLPQWDAALALELADELQRALRAPNWRDTLRSLYGNDPNCWSPDLKHADRLRVAFNAFTRIRFCTPEGAMEFRANGGPAAAPAGYLPWFDAPGRKTADVTVVFGHWAALGLMLRENLVALDSGCVWGNRLSAVRLADDPAARVVTQVACERCGAADE.

Belongs to the Ap4A hydrolase family.

The catalysed reaction is P(1),P(4)-bis(5'-adenosyl) tetraphosphate + H2O = 2 ADP + 2 H(+). Hydrolyzes diadenosine 5',5'''-P1,P4-tetraphosphate to yield ADP. The polypeptide is Bis(5'-nucleosyl)-tetraphosphatase, symmetrical (Burkholderia pseudomallei (strain 1106a)).